The primary structure comprises 759 residues: Tripartite motif-containing protein 46 (759 aa).

The required for proximal axon localization, axon formation and migration stretch occupies residues 1–166 (MAEGEDMQTF…VERYRQSVSV (166 aa)). The RING-type 1; degenerate zinc-finger motif lies at 33 to 59 (CPVCQEMYKQPLVLPCTHNVCQACARE). Positions 67–98 (IGHGGDPSSEPTSPASTPSTRSPRLSRRTLPK) are disordered. Residues 73–89 (PSSEPTSPASTPSTRSP) are compositionally biased toward low complexity. An RING-type 2; degenerate zinc finger spans residues 172–231 (CQLCKPPPLEATKGCSECRATFCNECFKLFHPWGTQKAQHEPTLPTLSFRPKGLMCPDHK). The B box-type zinc-finger motif lies at 222 to 263 (PKGLMCPDHKEEVTHYCKTCQRLVCQLCRVRRTHSGHKITPV). Zn(2+) contacts are provided by Cys227, His230, Cys249, and His255. Residues 294–400 (ELEETIRHTE…RATEALQTFR (107 aa)) adopt a coiled-coil conformation. Ser330 bears the Phosphoserine mark. One can recognise a COS domain in the interval 370-427 (LKETDQPCFVQAAKQLHNRIARATEALQTFRPAASSSFRHCQLDVGREMKLLTELNFL). The tract at residues 411-429 (QLDVGREMKLLTELNFLRV) is required for microtubule association, proximal axon localization and axon formation. Positions 429–528 (VPEAPVIDTQ…EDVHLHTPPA (100 aa)) constitute a Fibronectin type-III domain. The B30.2/SPRY domain occupies 513-747 (GYGEYSEDVH…LQEPVGTKPE (235 aa)). At Ser627 the chain carries Phosphoserine.

This sequence belongs to the TRIM/RBCC family. In terms of assembly, interacts with TUBB3 and TUBA4A. In terms of tissue distribution, expressed in primary hippocampal and cortical neurons.

The protein resides in the cell projection. The protein localises to the axon. It is found in the cytoplasm. It localises to the cytoskeleton. Its function is as follows. Microtubule-associated protein that is involved in the formation of parallel microtubule bundles linked by cross-bridges in the proximal axon. Required for the uniform orientation and maintenance of the parallel microtubule fascicles, which are important for efficient cargo delivery and trafficking in axons. Thereby also required for proper axon specification, the establishment of neuronal polarity and proper neuronal migration. The protein is Tripartite motif-containing protein 46 of Rattus norvegicus (Rat).